We begin with the raw amino-acid sequence, 633 residues long: Kelch repeat and BTB domain-containing protein 11 (633 aa).

The interval 1 to 118 (MENSVAPFVL…EDPPSRHEHA (118 aa)) is disordered. A compositionally biased stretch (polar residues) spans 35–60 (STAQTPCSLSASLCFSSGDDSPPQSR). Over residues 61–73 (ASAAEGSEASPPS) the composition is skewed to low complexity. Phosphoserine is present on residues Ser-70, Ser-73, Ser-92, Ser-95, Ser-107, and Ser-113. The region spanning 146-206 (PDLVIEVAGR…AYSGRMAGVR (61 aa)) is the BTB domain. Kelch repeat units follow at residues 317–365 (RPQS…VLFN), 366–418 (YLFL…ALDG), 419–463 (HLYA…TCNG), and 465–506 (IYVS…ALDG).

In Mus musculus (Mouse), this protein is Kelch repeat and BTB domain-containing protein 11 (Kbtbd11).